Reading from the N-terminus, the 376-residue chain is Chaperone protein DnaJ (376 aa).

The J domain occupies D5–G72. The CR-type zinc finger occupies G136–Q214. 8 residues coordinate Zn(2+): C149, C152, C166, C169, C188, C191, C202, and C205. CXXCXGXG motif repeat units follow at residues C149–G156, C166–G173, C188–G195, and C202–G209. Disordered regions lie at residues D227–P246 and S352–S376. Gly residues predominate over residues G237 to P246. The span at W367–S376 shows a compositional bias: basic and acidic residues.

This sequence belongs to the DnaJ family. As to quaternary structure, homodimer. The cofactor is Zn(2+).

It localises to the cytoplasm. Participates actively in the response to hyperosmotic and heat shock by preventing the aggregation of stress-denatured proteins and by disaggregating proteins, also in an autonomous, DnaK-independent fashion. Unfolded proteins bind initially to DnaJ; upon interaction with the DnaJ-bound protein, DnaK hydrolyzes its bound ATP, resulting in the formation of a stable complex. GrpE releases ADP from DnaK; ATP binding to DnaK triggers the release of the substrate protein, thus completing the reaction cycle. Several rounds of ATP-dependent interactions between DnaJ, DnaK and GrpE are required for fully efficient folding. Also involved, together with DnaK and GrpE, in the DNA replication of plasmids through activation of initiation proteins. The protein is Chaperone protein DnaJ of Acidovorax sp. (strain JS42).